The sequence spans 317 residues: Sulfate adenylyltransferase subunit 2 (317 aa).

2 disordered regions span residues 1–21 and 298–317; these read MPDS…APLD and RAID…EGYF.

The protein belongs to the PAPS reductase family. CysD subfamily. Heterodimer composed of CysD, the smaller subunit, and CysN.

It carries out the reaction sulfate + ATP + H(+) = adenosine 5'-phosphosulfate + diphosphate. Its pathway is sulfur metabolism; hydrogen sulfide biosynthesis; sulfite from sulfate: step 1/3. With CysN forms the ATP sulfurylase (ATPS) that catalyzes the adenylation of sulfate producing adenosine 5'-phosphosulfate (APS) and diphosphate, the first enzymatic step in sulfur assimilation pathway. APS synthesis involves the formation of a high-energy phosphoric-sulfuric acid anhydride bond driven by GTP hydrolysis by CysN coupled to ATP hydrolysis by CysD. The protein is Sulfate adenylyltransferase subunit 2 of Rhizobium etli (strain ATCC 51251 / DSM 11541 / JCM 21823 / NBRC 15573 / CFN 42).